A 349-amino-acid chain; its full sequence is Ion-translocating oxidoreductase complex subunit D (349 aa).

Transmembrane regions (helical) follow at residues Cys-36–Ser-56, Ser-77–Val-99, and Ala-124–Ala-144. At Thr-185 the chain carries FMN phosphoryl threonine. 5 consecutive transmembrane segments (helical) span residues Ser-212–Leu-232, Trp-239–Leu-259, Ala-265–Thr-285, Ala-291–Ile-311, and Gly-315–Ile-335.

The protein belongs to the NqrB/RnfD family. As to quaternary structure, the complex is composed of six subunits: RnfA, RnfB, RnfC, RnfD, RnfE and RnfG. FMN serves as cofactor.

The protein localises to the cell inner membrane. Its function is as follows. Part of a membrane-bound complex that couples electron transfer with translocation of ions across the membrane. This chain is Ion-translocating oxidoreductase complex subunit D, found in Shewanella oneidensis (strain ATCC 700550 / JCM 31522 / CIP 106686 / LMG 19005 / NCIMB 14063 / MR-1).